The primary structure comprises 362 residues: Probable dual-specificity RNA methyltransferase RlmN (362 aa).

Residue E105 is the Proton acceptor of the active site. Positions 111-344 (HEYGNSICVT…VTIRREQGHD (234 aa)) constitute a Radical SAM core domain. C118 and C349 are oxidised to a cystine. [4Fe-4S] cluster is bound by residues C125, C129, and C132. S-adenosyl-L-methionine is bound by residues 175–176 (GE), S207, 230–232 (SLH), and N306. C349 (S-methylcysteine intermediate) is an active-site residue.

This sequence belongs to the radical SAM superfamily. RlmN family. The cofactor is [4Fe-4S] cluster.

The protein resides in the cytoplasm. The enzyme catalyses adenosine(2503) in 23S rRNA + 2 reduced [2Fe-2S]-[ferredoxin] + 2 S-adenosyl-L-methionine = 2-methyladenosine(2503) in 23S rRNA + 5'-deoxyadenosine + L-methionine + 2 oxidized [2Fe-2S]-[ferredoxin] + S-adenosyl-L-homocysteine. The catalysed reaction is adenosine(37) in tRNA + 2 reduced [2Fe-2S]-[ferredoxin] + 2 S-adenosyl-L-methionine = 2-methyladenosine(37) in tRNA + 5'-deoxyadenosine + L-methionine + 2 oxidized [2Fe-2S]-[ferredoxin] + S-adenosyl-L-homocysteine. In terms of biological role, specifically methylates position 2 of adenine 2503 in 23S rRNA and position 2 of adenine 37 in tRNAs. This chain is Probable dual-specificity RNA methyltransferase RlmN, found in Bacillus anthracis (strain CDC 684 / NRRL 3495).